A 368-amino-acid polypeptide reads, in one-letter code: 3-dehydroquinate synthase (368 aa).

Residues D80–K85, G114–D118, T138–T139, K151, and K160 contribute to the NAD(+) site. Residues E193, H255, and H271 each coordinate Zn(2+).

Belongs to the sugar phosphate cyclases superfamily. Dehydroquinate synthase family. The cofactor is Co(2+). Requires Zn(2+) as cofactor. NAD(+) serves as cofactor.

Its subcellular location is the cytoplasm. The catalysed reaction is 7-phospho-2-dehydro-3-deoxy-D-arabino-heptonate = 3-dehydroquinate + phosphate. The protein operates within metabolic intermediate biosynthesis; chorismate biosynthesis; chorismate from D-erythrose 4-phosphate and phosphoenolpyruvate: step 2/7. Its function is as follows. Catalyzes the conversion of 3-deoxy-D-arabino-heptulosonate 7-phosphate (DAHP) to dehydroquinate (DHQ). The polypeptide is 3-dehydroquinate synthase (Corynebacterium jeikeium (strain K411)).